A 205-amino-acid polypeptide reads, in one-letter code: FMN-dependent NADH:quinone oxidoreductase (205 aa).

Residues Ser10 and 16–18 (SVS) each bind FMN.

It belongs to the azoreductase type 1 family. In terms of assembly, homodimer. The cofactor is FMN.

It catalyses the reaction 2 a quinone + NADH + H(+) = 2 a 1,4-benzosemiquinone + NAD(+). It carries out the reaction N,N-dimethyl-1,4-phenylenediamine + anthranilate + 2 NAD(+) = 2-(4-dimethylaminophenyl)diazenylbenzoate + 2 NADH + 2 H(+). Its function is as follows. Quinone reductase that provides resistance to thiol-specific stress caused by electrophilic quinones. Also exhibits azoreductase activity. Catalyzes the reductive cleavage of the azo bond in aromatic azo compounds to the corresponding amines. This Agrobacterium fabrum (strain C58 / ATCC 33970) (Agrobacterium tumefaciens (strain C58)) protein is FMN-dependent NADH:quinone oxidoreductase.